A 150-amino-acid polypeptide reads, in one-letter code: Large ribosomal subunit protein bL9 (150 aa).

The protein belongs to the bacterial ribosomal protein bL9 family.

Its function is as follows. Binds to the 23S rRNA. The chain is Large ribosomal subunit protein bL9 from Burkholderia thailandensis (strain ATCC 700388 / DSM 13276 / CCUG 48851 / CIP 106301 / E264).